The chain runs to 269 residues: Formamidopyrimidine-DNA glycosylase (269 aa).

Catalysis depends on Pro-2, which acts as the Schiff-base intermediate with DNA. Glu-3 serves as the catalytic Proton donor. The Proton donor; for beta-elimination activity role is filled by Lys-57. The DNA site is built by His-90, Arg-109, and Lys-150. An FPG-type zinc finger spans residues 235–269; it reads QVYGKAGESCPECGEAIQELKIGQRNTFYCSYCQC. Arg-259 serves as the catalytic Proton donor; for delta-elimination activity.

Belongs to the FPG family. In terms of assembly, monomer. Zn(2+) serves as cofactor.

It catalyses the reaction Hydrolysis of DNA containing ring-opened 7-methylguanine residues, releasing 2,6-diamino-4-hydroxy-5-(N-methyl)formamidopyrimidine.. It carries out the reaction 2'-deoxyribonucleotide-(2'-deoxyribose 5'-phosphate)-2'-deoxyribonucleotide-DNA = a 3'-end 2'-deoxyribonucleotide-(2,3-dehydro-2,3-deoxyribose 5'-phosphate)-DNA + a 5'-end 5'-phospho-2'-deoxyribonucleoside-DNA + H(+). Functionally, involved in base excision repair of DNA damaged by oxidation or by mutagenic agents. Acts as a DNA glycosylase that recognizes and removes damaged bases. Has a preference for oxidized purines, such as 7,8-dihydro-8-oxoguanine (8-oxoG). Has AP (apurinic/apyrimidinic) lyase activity and introduces nicks in the DNA strand. Cleaves the DNA backbone by beta-delta elimination to generate a single-strand break at the site of the removed base with both 3'- and 5'-phosphates. The protein is Formamidopyrimidine-DNA glycosylase of Vibrio vulnificus (strain YJ016).